Here is a 74-residue protein sequence, read N- to C-terminus: Mu-Sparatoxin-Hp2 (74 aa).

The N-terminal stretch at 1–20 (MKIIVLMMMLFAAFSAVVLA) is a signal peptide. Residues 21 to 35 (DKSIEDAALDTVMDR) constitute a propeptide that is removed on maturation. 3 cysteine pairs are disulfide-bonded: cysteine 42-cysteine 57, cysteine 49-cysteine 62, and cysteine 56-cysteine 66. Position 73 is a leucine amide (leucine 73).

As to expression, expressed by the venom gland.

Its subcellular location is the secreted. In terms of biological role, weakly nhibits voltage-gated sodium channels Nav1.7/SCN9A. High concentration of the toxin (3 uM) inhibits Nav1.7/SCN9A currents by 80%. The chain is Mu-Sparatoxin-Hp2 from Heteropoda pingtungensis (Pingtung huntsman spider).